The sequence spans 379 residues: Cytochrome b (379 aa).

4 helical membrane-spanning segments follow: residues 33–53 (FGSLLGMCLMIQILTGLFLAM), 77–98 (WLIRYLHANGASMFFICLFIHV), 113–133 (WNIGIILFLMTMATAFVGYVL), and 178–198 (FFAFHFILPFIIAAFALVHLL). 2 residues coordinate heme b: His-83 and His-97. Positions 182 and 196 each coordinate heme b. An a ubiquinone-binding site is contributed by His-201. 4 helical membrane passes run 226-246 (TKDLLGIFLLLLVLMILALFF), 288-308 (LGGVLALVLSILILAAFPLLN), 320-340 (VTQVIYWIFIANLLVLTWIGG), and 347-367 (FTMIGQIASITYFAIITILMP).

The protein belongs to the cytochrome b family. The cytochrome bc1 complex contains 11 subunits: 3 respiratory subunits (MT-CYB, CYC1 and UQCRFS1), 2 core proteins (UQCRC1 and UQCRC2) and 6 low-molecular weight proteins (UQCRH/QCR6, UQCRB/QCR7, UQCRQ/QCR8, UQCR10/QCR9, UQCR11/QCR10 and a cleavage product of UQCRFS1). This cytochrome bc1 complex then forms a dimer. The cofactor is heme b.

Its subcellular location is the mitochondrion inner membrane. Component of the ubiquinol-cytochrome c reductase complex (complex III or cytochrome b-c1 complex) that is part of the mitochondrial respiratory chain. The b-c1 complex mediates electron transfer from ubiquinol to cytochrome c. Contributes to the generation of a proton gradient across the mitochondrial membrane that is then used for ATP synthesis. The polypeptide is Cytochrome b (MT-CYB) (Akodon fumeus (Smoky grass mouse)).